The primary structure comprises 82 residues: U17-hexatoxin-Hi1a (82 aa).

An N-terminal signal peptide occupies residues 1–21 (MKTIFAVTLLLFAIYVPECMP). 5 disulfide bridges follow: C22–C33, C27–C48, C32–C61, C58–C69, and C63–C75.

In terms of tissue distribution, expressed by the venom gland.

The protein localises to the secreted. Its function is as follows. Probable ion channel inhibitor. The chain is U17-hexatoxin-Hi1a from Hadronyche infensa (Fraser island funnel-web spider).